We begin with the raw amino-acid sequence, 657 residues long: Glycogen debranching enzyme (657 aa).

Asp-336 acts as the Nucleophile in catalysis. Glu-371 (proton donor) is an active-site residue. Positions 460–479 (ANGEENRDGTNNNHSFNHGI) are disordered.

This sequence belongs to the glycosyl hydrolase 13 family.

It carries out the reaction Hydrolysis of (1-&gt;6)-alpha-D-glucosidic linkages to branches with degrees of polymerization of three or four glucose residues in limit dextrin.. It functions in the pathway glycan degradation; glycogen degradation. Its function is as follows. Removes maltotriose and maltotetraose chains that are attached by 1,6-alpha-linkage to the limit dextrin main chain, generating a debranched limit dextrin. The protein is Glycogen debranching enzyme of Enterobacter sp. (strain 638).